The chain runs to 290 residues: Xyloglucan endotransglycosylase/hydrolase protein 8 (290 aa).

The signal sequence occupies residues Met-1–Ala-25. The region spanning Ala-26–Tyr-218 is the GH16 domain. Glu-106 acts as the Nucleophile in catalysis. Glu-110 serves as the catalytic Proton donor. Xyloglucan is bound at residue Glu-110. N-linked (GlcNAc...) asparagine glycosylation is present at Asn-114. Xyloglucan contacts are provided by residues Asn-123–Asn-125, Lys-133–Glu-135, and Tyr-197–Trp-198. 2 disulfides stabilise this stretch: Cys-226–Cys-240 and Cys-273–Cys-287. Arg-278 is a xyloglucan binding site.

This sequence belongs to the glycosyl hydrolase 16 family. XTH group 2 subfamily. In terms of processing, contains at least one intrachain disulfide bond essential for its enzymatic activity. In terms of tissue distribution, transcript strongly detected in leaf sheaths. Weakly or not expressed in leaf blades, roots and calli. Accumulation of transcript detected in shoot apex meristem, vascular tissues, young leaves, vascular bundles of leaf sheaths, and peripheral cylinder of the vascular bundles and fibers in the nodal region.

The protein localises to the secreted. It localises to the cell wall. Its subcellular location is the extracellular space. The protein resides in the apoplast. The enzyme catalyses breaks a beta-(1-&gt;4) bond in the backbone of a xyloglucan and transfers the xyloglucanyl segment on to O-4 of the non-reducing terminal glucose residue of an acceptor, which can be a xyloglucan or an oligosaccharide of xyloglucan.. Its function is as follows. Catalyzes xyloglucan endohydrolysis (XEH) and/or endotransglycosylation (XET). Cleaves and religates xyloglucan polymers, an essential constituent of the primary cell wall, and thereby participates in cell wall construction of growing tissues. May promote elongation of three internodes (II, III and IV) and may be involved in cell elongation processes. This Oryza sativa subsp. japonica (Rice) protein is Xyloglucan endotransglycosylase/hydrolase protein 8 (XTH8).